The following is a 1063-amino-acid chain: MATMLTSDEAGKLLDFSQKLDINLLDKIVEVVYTAQGEQLRLAQSILTTLKEHPEAWTRVDSILEYSQNQRTKFYALQILEEVIKTRWKVLPRNQCEGIKKYVVSLIIKTSSDPIVMEQNKVYLNKLNMILVHILKREWPRNWETFISDIVGASKTNESLCMNNMVILKNLSEEVFDFSQGQITQTKAKHLKDTMCSEFSQIFTLCSFVLENSMNAALIHVTLETLLRFLNWIPLGYIFETQQIETLIFKFLSVPMFRNVTLKCLSEIAGLTAANYDENFATLFKDTMVQLEQIVGQNMNMNHVFKHGSDTEQELVLNLAMFLCTFLKEHGKLVEDAKYVDYLNQALMYLVMISEVEDVEVFKICLEYWNSLVEDLYNSEFFHPTLESTKRQQVYPRRRFYAPILSKVRFIMISRMAKPEEVLVVENENGEVVREFMKDTNSINLYKNMRETLVFLTHLDSVDTDRIMTLKLLNQVNGSEFSWKNLNTLCWAIGSISGAFCEEDEKRFLVTVIKDLLGLCEQKKGKDNKAIIASNIMYVVGQYPRFLRAHWKFLKTVVNKLFEFMHETHDGVQDMACDTFIKIAIKCRRYFVTIQPNEACTFIDEILTTMSSIICDLQPQQVHTFYEAVGYMISAQVDQVQQDVLIERYMQLPNQVWDDIISRASKNVDFLKNMTAVKQLGSILKTNVAACKALGHAYVIQLGRIYLDMLNVYKITSENIIQAIEVNGVNVNNQPLIKTMHVVKKETLNLISEWVSRSNDNQLVMDNFIPPLLDAILLDYQRCKVPSAREPKVLSAMAIIVHKLRQHITNEVPKIFDAVFECTLDMINKNFEDFPQHRLSFYELLQAVNAHCFKAFLNIPPAQFKLVFDSVVWAFKHTMRNVADMGLNILFKMLQNLDQHPGAAQSFYQTYFTDILMQIFSVVTDTSHTAGLPNHAIILAYMFSLVENRKITVNLGPIPDNMIFIQEYVASLLKSAFTHLSDNQVKVFVTGLFNLDENVQAFKEHLRDFLIQIREATGEDDSDLYLEEREAALAEEQSNKHQMQRNIPGMLNPHELPEDMQDE.

The Importin N-terminal domain maps to 43–109 (AQSILTTLKE…KKYVVSLIIK (67 aa)). The tract at residues 1034 to 1063 (AEEQSNKHQMQRNIPGMLNPHELPEDMQDE) is disordered.

The protein belongs to the exportin family. In terms of assembly, interacts with Clbn (via its N-terminus). Associates with the nuclear pore complex via interaction with mbo and Nup214. Interacts with target proteins containing NES sequences such as actin and dl. As to expression, high expression observed in the developing embryonic brain, hind gut and posterior spiracles shortly before dorsal closure; and in the ventral nerve cord, midgut and somatic musculature shortly after dorsal closure. Expression increases when the tissue is well developed.

The protein localises to the nucleus. It is found in the nucleus membrane. In terms of biological role, receptor for the leucine-rich nuclear export signal (NES). Binds cooperatively to the NES on its target protein and to the small GTPase Ran in its active GTP-bound form. Involved in the export of dl, RpS2 and the pre-40S ribosome from the nucleus to the cytoplasm. Plays an important role in nuclear pore assembly by mediating nucleoporin condensation and biogenesis of annulate lamellae. Required for the function or maintenance of certain tissues such as brain and gut. This Drosophila melanogaster (Fruit fly) protein is Exportin-1.